A 290-amino-acid chain; its full sequence is MRMAVSMEDVKKLREMTGAGMLDCKKALEEAGGDIEKAKEILRVKGLAKAEKKAGRETKEGLIYVIVSEDRKKGAMIELNCETDFVARNEEFRKLAERITRHILEKDENKNKSGEGSEILSQELYDEPGKTVETLIKEAIAKIGENIRLSRYCRYDTEDYLHSYVHGGGRIGVLLDFKAPELNDQVLRLVQDVAMQIAAMRPEYVRIEDIPQEVLERERRILREQALQEGKPEHIVDKIVEGKLKKFYQEKVLLEQPFIKEEKKQVKDVIKESGLNVEIKRFCRFELGGL.

The segment at 83–86 (TDFV) is involved in Mg(2+) ion dislocation from EF-Tu.

It belongs to the EF-Ts family.

It is found in the cytoplasm. In terms of biological role, associates with the EF-Tu.GDP complex and induces the exchange of GDP to GTP. It remains bound to the aminoacyl-tRNA.EF-Tu.GTP complex up to the GTP hydrolysis stage on the ribosome. This Aquifex aeolicus (strain VF5) protein is Elongation factor Ts (tsf).